The chain runs to 87 residues: Toxin CsEv2 (87 aa).

The N-terminal stretch at 1–19 (MNSLLIITACLFLIGTVWA) is a signal peptide. The LCN-type CS-alpha/beta domain maps to 20–85 (KEGYLVNKST…TYPLPNKSCS (66 aa)). Intrachain disulfides connect Cys-31/Cys-84, Cys-35/Cys-60, Cys-44/Cys-65, and Cys-48/Cys-67.

This sequence belongs to the long (4 C-C) scorpion toxin superfamily. Sodium channel inhibitor family. Beta subfamily. Expressed by the venom gland.

It is found in the secreted. In terms of biological role, beta toxins bind voltage-independently at site-4 of sodium channels (Nav) and shift the voltage of activation toward more negative potentials thereby affecting sodium channel activation and promoting spontaneous and repetitive firing. Induces immediate paralysis in crickets after injection, with a total paralysis occurring within 15-30 minutes and lasting for 1-2 hours. Is also lethal to vertebrate (chicks) when injected in very high dosages (more that 100 mg/kg). In Centruroides sculpturatus (Arizona bark scorpion), this protein is Toxin CsEv2.